The chain runs to 290 residues: Transcription factor HES-1 (290 aa).

Residues 1–47 (MPADTGMEKPTASPIAGAPASASHTPDKPRSASEHRKSSKPIMEKRR) form a disordered region. The segment covering 10 to 23 (PTASPIAGAPASAS) has biased composition (low complexity). A compositionally biased stretch (basic and acidic residues) spans 25 to 36 (TPDKPRSASEHR). Residues 35–92 (HRKSSKPIMEKRRRARINESLGQLKMLILDALKKDSSRHSKLEKADILEMTVKHLRNL) enclose the bHLH domain. The Orange domain maps to 111 to 144 (YRAGFNECMNEVTRFLSTCEGVNADVRARLLGHL). The WRPW motif signature appears at 287 to 290 (WRPW).

As to quaternary structure, transcription repression requires formation of a complex with a corepressor protein of the Groucho/TLE family.

The protein localises to the nucleus. Functionally, transcriptional repressor of genes that require a bHLH protein for their transcription. May act as a negative regulator of myogenesis by inhibiting the functions of MYOD1 and ASH1. The sequence is that of Transcription factor HES-1 (HES1) from Gallus gallus (Chicken).